A 731-amino-acid chain; its full sequence is Gelsolin (731 aa).

The interval 2 to 125 (VVEHPEFLKA…YKKGGVASGF (124 aa)) is actin-severing. Residues 25-107 (FDLVPVPPNL…VQGFESATFL (83 aa)) form a Gelsolin-like 1 repeat. Phosphotyrosine is present on Y35. The Ca(2+) site is built by G41, D42, E73, D85, G90, and A92. Positions 72–75 (DESG) are actin-actin interfilament contact point. 111–118 (KSGLKYKK) lines the a 1,2-diacyl-sn-glycero-3-phospho-(1D-myo-inositol-4,5-bisphosphate) pocket. V121 is a binding site for Ca(2+). 137–145 (RLFQVKGRR) serves as a coordination point for a 1,2-diacyl-sn-glycero-3-phospho-(1D-myo-inositol-4,5-bisphosphate). One copy of the Gelsolin-like 2 repeat lies at 147 to 219 (VRATEVPVSW…SEEGAEPEAM (73 aa)). Residues G162 and D163 each coordinate Ca(2+). Cysteines 164 and 177 form a disulfide. E185 contributes to the Ca(2+) binding site. A compositionally biased stretch (basic and acidic residues) spans 197 to 211 (RDNERSGRARVHVSE). The segment at 197–216 (RDNERSGRARVHVSEEGAEP) is disordered. Ca(2+) contacts are provided by D235, E278, D279, and E303. One copy of the Gelsolin-like 3 repeat lies at 266 to 338 (DENPFAQGAL…LPEGGETPLF (73 aa)). Y358 and Y414 each carry phosphotyrosine. An actin-binding, Ca-sensitive region spans residues 383–731 (AAQHGMDDDG…LDRALAELAA (349 aa)). The Gelsolin-like 4 repeat unit spans residues 404-485 (SDKVPVDPAT…VQGKEPAHLM (82 aa)). G420, D421, E451, D463, G468, P470, and T500 together coordinate Ca(2+). The Gelsolin-like 5 repeat unit spans residues 527 to 591 (AVEVMPKAGA…AEGSEPDSFW (65 aa)). An N6-acetyllysine modification is found at K533. 2 residues coordinate Ca(2+): N540 and D541. Position 552 is a phosphotyrosine (Y552). E563 is a binding site for Ca(2+). A Phosphotyrosine modification is found at Y600. A Gelsolin-like 6 repeat occupies 630–705 (IEEVPGELMQ…VKQGFEPPSF (76 aa)). 3 residues coordinate Ca(2+): D645, D646, and E668. T691 is modified (phosphothreonine).

Belongs to the villin/gelsolin family. As to quaternary structure, binds to actin and to fibronectin. Identified in a complex composed of ACTA1, COBL, GSN and TMSB4X. Interacts with the inactive form of EIF2AK2/PKR. Interacts with FLII.

It localises to the cytoplasm. The protein localises to the cytoskeleton. Its function is as follows. Calcium-regulated, actin-modulating protein that binds to the plus (or barbed) ends of actin monomers or filaments, preventing monomer exchange (end-blocking or capping). It can promote the assembly of monomers into filaments (nucleation) as well as sever filaments already formed. Plays a role in ciliogenesis. This Bos taurus (Bovine) protein is Gelsolin (GSN).